Consider the following 125-residue polypeptide: Lymphocyte antigen 6 complex locus protein G6c (125 aa).

An N-terminal signal peptide occupies residues 1–18 (MRALLLLSLSALLCWVSA). The UPAR/Ly6 domain maps to 20–111 (IRCHSCYKLP…PRPTPALTLV (92 aa)). Cystine bridges form between cysteine 22–cysteine 47, cysteine 25–cysteine 33, and cysteine 39–cysteine 65. Asparagine 88 carries an N-linked (GlcNAc...) asparagine glycan. Cysteine 92 and cysteine 97 are disulfide-bonded. The GPI-anchor amidated serine moiety is linked to residue serine 99. A propeptide spans 100-125 (PAPRPTPALTLVFLTSLAGLGLWLLH) (removed in mature form).

N-glycosylated.

Its subcellular location is the cell membrane. In Bos taurus (Bovine), this protein is Lymphocyte antigen 6 complex locus protein G6c (LY6G6C).